The chain runs to 309 residues: MPKLNDVVAEIAADLAKATERGAVATYIPMLAEVPINQFGMAVVTADGETILAGDADTVFSIQSISKVFTLTLALGQIGDALWTRVGKEPSGNAFNSIVQLEYEHGIPRNPFINAGAIVVADAMLSGHQPREALGAILRFVRFVAADESITIDEAVARSEKETGFRNTALANYMRSFGVLRHPVDHALGVYFHQCAIAMSCRHLARAGRYLAFSGRLTPEGPSVVASERARRIAALMLTCGHYDGSGDFAFRVGLPGKSGVGGGILAIAPGKASIAVWSPGLDPHGNSLLGSIALERLAKAMRWSVFAG.

Positions 64, 114, 160, 167, 191, 243, and 261 each coordinate substrate.

The protein belongs to the glutaminase family. In terms of assembly, homotetramer.

It catalyses the reaction L-glutamine + H2O = L-glutamate + NH4(+). The protein is Glutaminase of Azorhizobium caulinodans (strain ATCC 43989 / DSM 5975 / JCM 20966 / LMG 6465 / NBRC 14845 / NCIMB 13405 / ORS 571).